We begin with the raw amino-acid sequence, 1168 residues long: MDDLKELEYLSLVSKVASEIRNHTGIDDNTLAEFIINLHDQSKNYDEFKNNVLSCGGEFTDSFLQNISRLIKEIKPKDDIPTDNVNNGSNSVNGASHDLDSKDVDKQHQRKMFPGLSIPNSTNNLRDRPALMDNAMDELEELSTLAKTRRNDRDSRRDERHYLNGIRERRERSISPSFSHHSRTSISGQSHSSRSSRGPLLNAPTLYGIYSGVVSGIKDFGAFVTLDGFRKRTDGLVHISNIQLNGRLDHPSEAVSYGQPVFVKVIRIDESAKRISLSMKEVNQVTGEDLNPDQVSRSTKKGSGANAIPLSAQNSEIGHVNPLETFTSNGRKRLTSPEIWELQQLAASGAISATDIPELNDGFNTNNAAEINPEDDEDVEIELREEEPGFLAGQTKVSLKLSPIKVVKAPDGSLSRAAMQGQILANDRREIRQKEAKLKSEQEMEKQDLSLSWQDTMSNPQDRKFAQDVRDSAARQLTSETPSWRQATRNANISYGKRTTLSMKEQREGLPVFKLRKQFLEAVSKNQILVLLGETGSGKTTQITQYLAEEGYTSDSKMIGCTQPRRVAAMSVAKRVAEEVGCRVGEEVGYTIRFEDKTSRMTQIKYMTDGMLQRECLVDPLLSKYSVIILDEAHERTVATDVLFGLLKGTVLKRPDLKLIVTSATLDAERFSSYFYKCPIFTIPGRSYPVEIMYTKQPEADYLDAALMTVMQIHLSEGPGDILVFLTGQEEIDTSCEILYERSKMLGDSIPELVILPVYSALPSEIQSRIFEPAPPGGRKVVIATNIAETSLTIDGIYYVVDPGFVKQSCFDPKLGMDSLIVTPISQAQARQRSGRAGRTGPGKCYRLYTESAYRNEMLPSPIPEIQRQNLSHTILMLKAMGINDLLNFDFMDPPPAQTMIAALQNLYALSALDDEGLLTPLGRKMADFPMEPQLSKVLITSVELGCSEEMLSIIAMLSVPNIWSRPREKQQEADRQRAQFANPESDHLTLLNVYTTWKMNRCSDNWCYEHYIQARGMRRAEDVRKQLIRLMDRYRHPVVSCGRKRELILRALCSGYFTNVAKRDSHEGCYKTIVENAPVYMHPSGVLFGKAAEWVIYHELIQTSKEYMHTVSTVNPKWLVEVAPTFFKFANANQVSKTKKNLKVLPLYNRFEKPDEWRISKQRKGGR.

2 disordered regions span residues 77-100 and 144-197; these read KDDI…HDLD and TLAK…RSSR. Low complexity predominate over residues 84-94; that stretch reads NVNNGSNSVNG. Residues 149-173 are compositionally biased toward basic and acidic residues; it reads RRNDRDSRRDERHYLNGIRERRERS. Residues 184–197 are compositionally biased toward low complexity; the sequence is TSISGQSHSSRSSR. In terms of domain architecture, S1 motif spans 207-280; that stretch reads YGIYSGVVSG…SAKRISLSMK (74 aa). Residues 287-314 are disordered; sequence GEDLNPDQVSRSTKKGSGANAIPLSAQN. One can recognise a Helicase ATP-binding domain in the interval 520-684; sequence LEAVSKNQIL…FYKCPIFTIP (165 aa). 533–540 contributes to the ATP binding site; sequence GETGSGKT. A DEAH box motif is present at residues 631–634; the sequence is DEAH. Residues 702 to 882 form the Helicase C-terminal domain; sequence YLDAALMTVM…HTILMLKAMG (181 aa).

Belongs to the DEAD box helicase family. DEAH subfamily. DDX8/PRP22 sub-subfamily. In terms of assembly, belongs to the 40S cdc5-associated complex (or cwf complex), a spliceosome sub-complex reminiscent of a late-stage spliceosome composed of the U2, U5 and U6 snRNAs and at least brr2, cdc5, cwf2/prp3, cwf3/syf1, cwf4/syf3, cwf5/ecm2, spp42/cwf6, cwf7/spf27, cwf8, cwf9, cwf10, cwf11, cwf12, prp45/cwf13, cwf14, cwf15, cwf16, cwf17, cwf18, cwf19, cwf20, cwf21, cwf22, cwf23, cwf24, cwf25, cwf26, cyp7/cwf27, cwf28, cwf29/ist3, lea1, msl1, prp5/cwf1, prp10, prp12/sap130, prp17, prp22, sap61, sap62, sap114, sap145, slu7, smb1, smd1, smd3, smf1, smg1 and syf2.

The protein resides in the nucleus. It catalyses the reaction ATP + H2O = ADP + phosphate + H(+). Functionally, acts late in the splicing of pre-mRNA. Required for the splicing of introns with a branch nucleotide to 3'-splice site distance greater or equal to 15. Mediates the release of the spliced mRNA from spliceosomes. The sequence is that of Pre-mRNA-splicing factor ATP-dependent RNA helicase prp22 (prp22) from Schizosaccharomyces pombe (strain 972 / ATCC 24843) (Fission yeast).